We begin with the raw amino-acid sequence, 106 residues long: uncharacterized protein (106 aa).

This is an uncharacterized protein from Schizosaccharomyces pombe (strain 972 / ATCC 24843) (Fission yeast).